We begin with the raw amino-acid sequence, 599 residues long: Leucine zipper putative tumor suppressor 1 (599 aa).

Residue glycine 2 is the site of N-myristoyl glycine attachment. Disordered stretches follow at residues 135-190 and 288-324; these read GAIL…TTSS and EFASGQTFEERPRRTRDELECLEPKSKLKPPSQKSQR. The span at 153–162 shows a compositional bias: basic and acidic residues; sequence PPDKPKEQEL. Residues 174–190 show a composition bias toward polar residues; sequence SGRNSMSSLPTHSTTSS. Positions 256–572 form a coiled coil; that stretch reads LSTDECTIQE…LEKALQQLAR (317 aa). The segment covering 288–313 has biased composition (basic and acidic residues); that stretch reads EFASGQTFEERPRRTRDELECLEPKS.

The protein belongs to the LZTS family. In terms of assembly, binds EEF1G, TLK2 and CDK1. In terms of processing, phosphorylated on serine residues. Hyperphosphorylated by the cAMP-dependent kinase PKA during cell-cycle progression.

The protein localises to the cytoplasm. It localises to the cell membrane. The protein resides in the cell projection. Its subcellular location is the dendritic spine. It is found in the postsynaptic density. The protein localises to the synapse. Its function is as follows. Involved in the regulation of cell growth. May stabilize the active CDC2-cyclin B1 complex and thereby contribute to the regulation of the cell cycle and the prevention of uncontrolled cell proliferation. May act as tumor suppressor. The protein is Leucine zipper putative tumor suppressor 1 (Lzts1) of Mus musculus (Mouse).